We begin with the raw amino-acid sequence, 153 residues long: NAD(P)H-quinone oxidoreductase subunit N (153 aa).

This sequence belongs to the complex I NdhN subunit family. In terms of assembly, NDH-1 can be composed of about 15 different subunits; different subcomplexes with different compositions have been identified which probably have different functions.

The protein localises to the cellular thylakoid membrane. It catalyses the reaction a plastoquinone + NADH + (n+1) H(+)(in) = a plastoquinol + NAD(+) + n H(+)(out). The catalysed reaction is a plastoquinone + NADPH + (n+1) H(+)(in) = a plastoquinol + NADP(+) + n H(+)(out). NDH-1 shuttles electrons from an unknown electron donor, via FMN and iron-sulfur (Fe-S) centers, to quinones in the respiratory and/or the photosynthetic chain. The immediate electron acceptor for the enzyme in this species is believed to be plastoquinone. Couples the redox reaction to proton translocation, and thus conserves the redox energy in a proton gradient. Cyanobacterial NDH-1 also plays a role in inorganic carbon-concentration. The chain is NAD(P)H-quinone oxidoreductase subunit N from Parasynechococcus marenigrum (strain WH8102).